The primary structure comprises 387 residues: 3-ketoacyl-CoA thiolase (387 aa).

Catalysis depends on Cys91, which acts as the Acyl-thioester intermediate. Residues His343 and Cys373 each act as proton acceptor in the active site.

It belongs to the thiolase-like superfamily. Thiolase family. As to quaternary structure, heterotetramer of two alpha chains (FadB) and two beta chains (FadA).

It is found in the cytoplasm. It catalyses the reaction an acyl-CoA + acetyl-CoA = a 3-oxoacyl-CoA + CoA. It functions in the pathway lipid metabolism; fatty acid beta-oxidation. Its function is as follows. Catalyzes the final step of fatty acid oxidation in which acetyl-CoA is released and the CoA ester of a fatty acid two carbons shorter is formed. The chain is 3-ketoacyl-CoA thiolase from Shewanella sp. (strain MR-7).